We begin with the raw amino-acid sequence, 198 residues long: DNA damage response protein D (198 aa).

Positions 124–198 are disordered; it reads SAAPTDPAGP…SEAGENTPAA (75 aa). A compositionally biased stretch (basic and acidic residues) spans 136 to 180; it reads PGTDRAERTAAERTASERATHDRASTERPARPRRSAEPEAVRTED.

Functionally, appears to contribute to D.radiodurans capacity to survive exposure to ionizing radiation. May play a role in DNA repair and genome reconstitution. The protein is DNA damage response protein D (ddrD) of Deinococcus radiodurans (strain ATCC 13939 / DSM 20539 / JCM 16871 / CCUG 27074 / LMG 4051 / NBRC 15346 / NCIMB 9279 / VKM B-1422 / R1).